The primary structure comprises 478 residues: Cytochrome c-552 (478 aa).

Positions 1–27 are cleaved as a signal peptide; that stretch reads MKKQWTRRSAAAIAMVTTLLLSSHSFA. Position 91 (histidine 91) interacts with heme c. Residues cysteine 119, cysteine 122, and lysine 123 each contribute to the heme site. Cysteine 157, cysteine 160, histidine 161, cysteine 206, cysteine 209, and histidine 210 together coordinate heme c. Ca(2+) is bound by residues glutamate 212, tyrosine 213, lysine 258, and glutamine 260. A substrate-binding site is contributed by tyrosine 213. Histidine 261 contacts substrate. Residues histidine 272, cysteine 279, cysteine 282, histidine 283, histidine 298, cysteine 311, cysteine 314, histidine 315, and histidine 390 each contribute to the heme c site.

The protein belongs to the cytochrome c-552 family. It depends on Ca(2+) as a cofactor. The cofactor is heme c.

It is found in the periplasm. It carries out the reaction 6 Fe(III)-[cytochrome c] + NH4(+) + 2 H2O = 6 Fe(II)-[cytochrome c] + nitrite + 8 H(+). It functions in the pathway nitrogen metabolism; nitrate reduction (assimilation). Catalyzes the reduction of nitrite to ammonia, consuming six electrons in the process. The sequence is that of Cytochrome c-552 from Aliivibrio salmonicida (strain LFI1238) (Vibrio salmonicida (strain LFI1238)).